The primary structure comprises 266 residues: Translation initiation factor 2 subunit alpha (266 aa).

An S1 motif domain is found at 12-83 (GEILIATVKQ…RKGTVDVSLK (72 aa)).

The protein belongs to the eIF-2-alpha family. Heterotrimer composed of an alpha, a beta and a gamma chain.

EIF-2 functions in the early steps of protein synthesis by forming a ternary complex with GTP and initiator tRNA. The protein is Translation initiation factor 2 subunit alpha of Saccharolobus solfataricus (strain ATCC 35092 / DSM 1617 / JCM 11322 / P2) (Sulfolobus solfataricus).